The primary structure comprises 579 residues: Eukaryotic translation initiation factor 3 subunit D (579 aa).

Disordered regions lie at residues 1 to 20 (MASF…GPAS), 51 to 72 (NASG…RARD), and 109 to 170 (RRGG…FGWK). Over residues 51-64 (NASGASNDAANARG) the composition is skewed to low complexity. A compositionally biased stretch (gly residues) spans 120–167 (GGRGGRGGAGGAGAAGGRGASKFGAGAGRGARGGRGGAAGARRGGGRF). Positions 307 to 321 (AFDYLTVNENAADPP) are RNA gate.

Belongs to the eIF-3 subunit D family. In terms of assembly, component of the eukaryotic translation initiation factor 3 (eIF-3) complex.

It localises to the cytoplasm. Functionally, mRNA cap-binding component of the eukaryotic translation initiation factor 3 (eIF-3) complex, which is involved in protein synthesis of a specialized repertoire of mRNAs and, together with other initiation factors, stimulates binding of mRNA and methionyl-tRNAi to the 40S ribosome. The eIF-3 complex specifically targets and initiates translation of a subset of mRNAs involved in cell proliferation. In the eIF-3 complex, eif3d specifically recognizes and binds the 7-methylguanosine cap of a subset of mRNAs. The polypeptide is Eukaryotic translation initiation factor 3 subunit D (Mycosarcoma maydis (Corn smut fungus)).